The primary structure comprises 152 residues: Phosphoribosyl-AMP cyclohydrolase (152 aa).

Mg(2+) is bound at residue Asp-92. Cys-93 serves as a coordination point for Zn(2+). Mg(2+) contacts are provided by Asp-94 and Asp-96. Zn(2+)-binding residues include Cys-111 and Cys-118.

The protein belongs to the PRA-CH family. In terms of assembly, homodimer. Requires Mg(2+) as cofactor. Zn(2+) is required as a cofactor.

It is found in the cytoplasm. It carries out the reaction 1-(5-phospho-beta-D-ribosyl)-5'-AMP + H2O = 1-(5-phospho-beta-D-ribosyl)-5-[(5-phospho-beta-D-ribosylamino)methylideneamino]imidazole-4-carboxamide. Its pathway is amino-acid biosynthesis; L-histidine biosynthesis; L-histidine from 5-phospho-alpha-D-ribose 1-diphosphate: step 3/9. Its function is as follows. Catalyzes the hydrolysis of the adenine ring of phosphoribosyl-AMP. The chain is Phosphoribosyl-AMP cyclohydrolase from Sinorhizobium fredii (strain NBRC 101917 / NGR234).